The primary structure comprises 158 residues: Endoribonuclease YbeY (158 aa).

Residues histidine 114, histidine 118, and histidine 124 each contribute to the Zn(2+) site.

This sequence belongs to the endoribonuclease YbeY family. Requires Zn(2+) as cofactor.

It is found in the cytoplasm. Its function is as follows. Single strand-specific metallo-endoribonuclease involved in late-stage 70S ribosome quality control and in maturation of the 3' terminus of the 16S rRNA. In Legionella pneumophila (strain Paris), this protein is Endoribonuclease YbeY.